A 404-amino-acid chain; its full sequence is L-cysteine:1D-myo-inositol 2-amino-2-deoxy-alpha-D-glucopyranoside ligase (404 aa).

C35 contacts Zn(2+). L-cysteinyl-5'-AMP contacts are provided by residues 35–38, T50, and 73–75; these read CGIT and NVT. The 'HIGH' region signature appears at 37-47; the sequence is ITPYDATHLGH. The 'ERGGDP' region motif lies at 178 to 183; it reads ERGGDP. W219 serves as a coordination point for L-cysteinyl-5'-AMP. C223 is a Zn(2+) binding site. 241–243 is an L-cysteinyl-5'-AMP binding site; that stretch reads GND. A Zn(2+)-binding site is contributed by H248. I275 is a binding site for L-cysteinyl-5'-AMP. A 'KMSKS' region motif is present at residues 281-285; it reads KMSKS.

This sequence belongs to the class-I aminoacyl-tRNA synthetase family. MshC subfamily. In terms of assembly, monomer. Zn(2+) is required as a cofactor.

The enzyme catalyses 1D-myo-inositol 2-amino-2-deoxy-alpha-D-glucopyranoside + L-cysteine + ATP = 1D-myo-inositol 2-(L-cysteinylamino)-2-deoxy-alpha-D-glucopyranoside + AMP + diphosphate + H(+). In terms of biological role, catalyzes the ATP-dependent condensation of GlcN-Ins and L-cysteine to form L-Cys-GlcN-Ins. The chain is L-cysteine:1D-myo-inositol 2-amino-2-deoxy-alpha-D-glucopyranoside ligase from Salinispora tropica (strain ATCC BAA-916 / DSM 44818 / JCM 13857 / NBRC 105044 / CNB-440).